An 848-amino-acid chain; its full sequence is Neprilysin-11 (848 aa).

Residues 1–74 lie on the Cytoplasmic side of the membrane; it reads MPFGNDPPDY…WWKSRTTMEK (74 aa). Residues 75 to 95 traverse the membrane as a helical; Signal-anchor for type II membrane protein segment; sequence LLLPVLLLFCLLTAVLLAVII. The Extracellular portion of the chain corresponds to 96–848; that stretch reads NTDKRIEAMK…VNPDHKCIVW (753 aa). The segment at 108–161 is disordered; the sequence is HATQTEHAGFGDPTENPTKTAEDPRVPPIVPEAPTSPEPEVTTSTEKPKEPEVC. The span at 133 to 144 shows a compositional bias: pro residues; sequence VPPIVPEAPTSP. In terms of domain architecture, Peptidase M13 spans 160–848; that stretch reads VCSTPGCVRA…VNPDHKCIVW (689 aa). Cys161 and Cys166 are oxidised to a cystine. N-linked (GlcNAc...) asparagine glycosylation is found at Asn178, Asn249, Asn284, Asn312, Asn337, Asn364, Asn398, and Asn438. 4 cysteine pairs are disulfide-bonded: Cys184/Cys833, Cys192/Cys793, Cys247/Cys509, and Cys719/Cys845. Residue His682 coordinates Zn(2+). The active site involves Glu683. His686 lines the Zn(2+) pocket. Residue Asn726 is glycosylated (N-linked (GlcNAc...) asparagine). Zn(2+) is bound at residue Glu744. Asp748 serves as the catalytic Proton donor.

It belongs to the peptidase M13 family. Zn(2+) serves as cofactor.

Its subcellular location is the cell membrane. Functionally, probable cell surface protease. This is Neprilysin-11 (nep-11) from Caenorhabditis elegans.